We begin with the raw amino-acid sequence, 120 residues long: Large ribosomal subunit protein uL18 (120 aa).

Belongs to the universal ribosomal protein uL18 family. Part of the 50S ribosomal subunit; part of the 5S rRNA/L5/L18/L25 subcomplex. Contacts the 5S and 23S rRNAs.

Its function is as follows. This is one of the proteins that bind and probably mediate the attachment of the 5S RNA into the large ribosomal subunit, where it forms part of the central protuberance. The protein is Large ribosomal subunit protein uL18 of Herminiimonas arsenicoxydans.